The following is a 252-amino-acid chain: H-2 class II histocompatibility antigen, A-F beta chain (252 aa).

A signal peptide spans 1–16; that stretch reads AAVVVLMVLSSPGTEG. The interval 17 to 109 is beta-1; it reads GNSERHFVSQ…VETPTSLRRL (93 aa). The Extracellular portion of the chain corresponds to 17–213; the sequence is GNSERHFVSQ…RAQSESARSK (197 aa). Disulfide bonds link Cys31-Cys93 and Cys132-Cys188. Asn35 carries N-linked (GlcNAc...) asparagine glycosylation. Residues 110–203 are beta-2; that stretch reads EQPNVVISLS…SLKSPITVEW (94 aa). An Ig-like C1-type domain is found at 112–200; sequence PNVVISLSRT…EHPSLKSPIT (89 aa). The interval 204 to 213 is connecting peptide; that stretch reads RAQSESARSK. A helical transmembrane segment spans residues 214-234; it reads MLSGIGGCVLGVIFLGLGLFI. Topologically, residues 235 to 252 are cytoplasmic; it reads RYRSQKGPRGPPPAGLLQ.

This sequence belongs to the MHC class II family. Ubiquitinated in immature dendritic cells leading to down-regulation of MHC class II.

It localises to the membrane. The chain is H-2 class II histocompatibility antigen, A-F beta chain (H2-Ab1) from Mus musculus (Mouse).